Consider the following 125-residue polypeptide: Small ribosomal subunit protein uS12 (125 aa).

The disordered stretch occupies residues 1 to 26; it reads MPTINQLVRKSRKTVKAQSDSPALKN. Residue D89 is modified to 3-methylthioaspartic acid.

It belongs to the universal ribosomal protein uS12 family. As to quaternary structure, part of the 30S ribosomal subunit. Contacts proteins S8 and S17. May interact with IF1 in the 30S initiation complex.

In terms of biological role, with S4 and S5 plays an important role in translational accuracy. Its function is as follows. Interacts with and stabilizes bases of the 16S rRNA that are involved in tRNA selection in the A site and with the mRNA backbone. Located at the interface of the 30S and 50S subunits, it traverses the body of the 30S subunit contacting proteins on the other side and probably holding the rRNA structure together. The combined cluster of proteins S8, S12 and S17 appears to hold together the shoulder and platform of the 30S subunit. This chain is Small ribosomal subunit protein uS12, found in Clostridium tetani (strain Massachusetts / E88).